The sequence spans 161 residues: Nucleotide-binding protein Pcar_0033 (161 aa).

This sequence belongs to the YajQ family.

Nucleotide-binding protein. This Syntrophotalea carbinolica (strain DSM 2380 / NBRC 103641 / GraBd1) (Pelobacter carbinolicus) protein is Nucleotide-binding protein Pcar_0033.